The following is a 139-amino-acid chain: Acidic phospholipase A2 DE-I (139 aa).

Positions 1-16 (MRTLWIMAVLLLGVEG) are cleaved as a signal peptide. 7 disulfide bridges follow: C42-C132, C44-C60, C59-C111, C65-C139, C66-C104, C73-C97, and C91-C102. Positions 43, 45, and 47 each coordinate Ca(2+). The active site involves H63. Ca(2+) is bound at residue D64. The active site involves D105.

Ca(2+) serves as cofactor. In terms of tissue distribution, expressed by the venom gland.

Its subcellular location is the secreted. It carries out the reaction a 1,2-diacyl-sn-glycero-3-phosphocholine + H2O = a 1-acyl-sn-glycero-3-phosphocholine + a fatty acid + H(+). In terms of biological role, snake venom phospholipase A2 (PLA2) that inhibits the ADP- and collagen-induced human platelet aggregation. Exhibits high hydrolytic activities and preferred the anionic micelles to the zwitterionic micelles. PLA2 catalyzes the calcium-dependent hydrolysis of the 2-acyl groups in 3-sn-phosphoglycerides. This chain is Acidic phospholipase A2 DE-I, found in Ovophis okinavensis (Ryukyu Island pit viper).